An 851-amino-acid polypeptide reads, in one-letter code: DNA mismatch repair protein MutS (851 aa).

ATP is bound at residue 602–609; that stretch reads GPNMSGKS.

This sequence belongs to the DNA mismatch repair MutS family.

Functionally, this protein is involved in the repair of mismatches in DNA. It is possible that it carries out the mismatch recognition step. This protein has a weak ATPase activity. In Streptococcus pyogenes serotype M2 (strain MGAS10270), this protein is DNA mismatch repair protein MutS.